The following is a 172-amino-acid chain: Peptide deformylase-like (172 aa).

Glu-134 is a catalytic residue.

Belongs to the polypeptide deformylase family.

This chain is Peptide deformylase-like, found in Rhizobium meliloti (strain 1021) (Ensifer meliloti).